Reading from the N-terminus, the 548-residue chain is Cytochrome P450 monooxygenase lcsK (548 aa).

The next 2 membrane-spanning stretches (helical) occupy residues 28 to 48 (HAYP…LWAF) and 68 to 88 (VLLF…RLFF). N-linked (GlcNAc...) asparagine glycosylation is found at Asn172, Asn223, Asn242, and Asn404. Cys487 provides a ligand contact to heme.

This sequence belongs to the cytochrome P450 family. Heme serves as cofactor.

The protein localises to the membrane. The protein operates within secondary metabolite biosynthesis. Functionally, cytochrome P450 monooxygenase; part of the gene cluster that mediates the biosynthesis of the lipopeptide antibiotics leucinostatins that show extensive biological activities, including antimalarial, antiviral, antibacterial, antifungal, and antitumor activities, as well as phytotoxic. Leucinostatin A contains nine amino acid residues, including the unusual amino acid 4-methyl-L-proline (MePro), 2-amino-6-hydroxy-4-methyl-8-oxodecanoic acid (AHyMeOA), 3-hydroxyleucine (HyLeu), alpha-aminoisobutyric acid (AIB), beta-Ala, a 4-methylhex-2-enoic acid at the N-terminus as well as a N1,N1-dimethylpropane-1,2-diamine (DPD) at the C-terminus. The biosynthesis of leucinostatins is probably initiated with the assembly of 4-methylhex-2-enoic acid by a reducing PKS. Two reducing polyketide synthases, lcsB and lcsC, have been identified in the cluster and it is not clear which is the one that assembles 4-methylhex-2-enoic acid since both contain KS, AT, DH, cMT, ER, KR and ACP domains. The polyketide residue might be transferred to the NRPS lcsA, mediated by two additional enzymes, the acyl-CoA ligase lcsD and the thioesterase lcsE. The linear polyketide carboxylic acid, which is released from PKS, is converted to a CoA thioester by lcsD, and then lcsE hydrolyzes the thiol bond and shuttles the polyketide intermediate to lcsA. The C domain of the first module catalyzed the condensation of 4-methylhex-2-enoic acid and MePro carried by domain A1, followed by successive condensations of nine amino acids to trigger the elongation of the linear peptide. A5 and A6 domains of lcsA are proposed to incorporate leucine, A2 AHyMeOA, and A3 incorporates HyLeu. A4, A7 and A8 incorporate AIB. The AHyMeOA in leucinostatin A activated by the A2 might be produced by the second PKS (lcsB or lcsC) present within the cluster. The MePro is probably produced via leucine cyclization and may originate from a separate pathway, independent of the cluster. Another nonproteinogenic amino acid, beta-Ala, could be produced by an aspartic acid decarboxylase also localized outside of the cluster. Two candidates are VFPBJ_01400 and VFPBJ_10476. The final peptide scaffold may be released by the NAD(P)H-dependent thioester reductase (TE) at the C-terminal region of lcsA. Transamination of the lcsA product by the transaminase lcsP may produce DPD at the C-terminus. Further hydroxylation steps performed alternatively by the cytochrome P450 monooxygenases lcsI, lcsK and lcsN then yield the non-methylated leucinostatins precursor. It is also possible that leucines can be hydroxylated prior to their incorporation into the peptide. Varying extents of methylation then lead to the formation of leucinostatins A and B. This is Cytochrome P450 monooxygenase lcsK from Purpureocillium lilacinum (Paecilomyces lilacinus).